A 603-amino-acid chain; its full sequence is MNHIRNFSIIAHIDHGKSTLADRLIQRCGGLQDREMSAQVLDSMDIEKERGITIKAQTASLKYKALDGQVYNLNLIDTPGHVDFSYEVSRSLSACEGALLVVDASQGVEAQTVANCYTALDLGVTVVPVLNKMDLPQADPDNAKQEIEEVIGIDATDAIPCSAKTGMGIDEILEAVVALIPAPKGNPDAALRAMIIDSWYDAYVGVVMLVRVVDGRLAKGDRIKLMASEATYNAEQLGVFTPHTEARQALEAGEVGFVIAGIKELQAARVGDTVTLIKGGTGGAAFTATEALPGFKEIQPQVFAGLYPSEASEYESLRDALEKLKLNDASLHYEPEVSEALGFGFRCGFLGLLHMEIVQERLEREFDQDLITTAPSVVYEVLKADGTTIKVENPSKIPDAGRVNEIREPIVTVHLYMPQDYVGAVMTLANQKRGVQLNMAYHGKQVMLTYEMPLGEIVLDFFDKLKSVSRGYASMDYEFKEFRASDVVKVDILLNGEKVDALSIIVHRSQSAYRGRAVVAKMREIISRQQFDVAIQAAIGANIIARETIKALRKNVIAKCYGGDISRKKKLLEKQKAGKKRMKQIGSVEVPQEAFLAILQVED.

Residues 2–184 enclose the tr-type G domain; it reads NHIRNFSIIA…AVVALIPAPK (183 aa). Residues 14 to 19 and 131 to 134 contribute to the GTP site; these read DHGKST and NKMD.

The protein belongs to the TRAFAC class translation factor GTPase superfamily. Classic translation factor GTPase family. LepA subfamily.

It is found in the cell inner membrane. It catalyses the reaction GTP + H2O = GDP + phosphate + H(+). In terms of biological role, required for accurate and efficient protein synthesis under certain stress conditions. May act as a fidelity factor of the translation reaction, by catalyzing a one-codon backward translocation of tRNAs on improperly translocated ribosomes. Back-translocation proceeds from a post-translocation (POST) complex to a pre-translocation (PRE) complex, thus giving elongation factor G a second chance to translocate the tRNAs correctly. Binds to ribosomes in a GTP-dependent manner. This Polaromonas naphthalenivorans (strain CJ2) protein is Elongation factor 4.